A 319-amino-acid polypeptide reads, in one-letter code: Probable casein kinase II subunit alpha homolog (319 aa).

Residues 37 to 316 (YQIYQRMGRG…ADECLRHPLF (280 aa)) enclose the Protein kinase domain. ATP is bound by residues 43–51 (MGRGKYSEV) and Lys64. The active-site Proton acceptor is Asp151.

The protein belongs to the protein kinase superfamily. Ser/Thr protein kinase family. CK2 subfamily. In terms of assembly, tetramer composed of two alpha chains, one beta chain and one beta' chain.

It catalyses the reaction L-seryl-[protein] + ATP = O-phospho-L-seryl-[protein] + ADP + H(+). The enzyme catalyses L-threonyl-[protein] + ATP = O-phospho-L-threonyl-[protein] + ADP + H(+). Catalytic subunit of a constitutively active serine/threonine-protein kinase complex that phosphorylates a large number of substrates containing acidic residues C-terminal to the phosphorylated serine or threonine. The chain is Probable casein kinase II subunit alpha homolog (CKA1) from Encephalitozoon cuniculi (strain GB-M1) (Microsporidian parasite).